The primary structure comprises 324 residues: Serpentine receptor class delta-30 (324 aa).

The next 7 membrane-spanning stretches (helical) occupy residues 5 to 25 (IIHS…MYLA), 38 to 58 (AIIT…FFVM), 83 to 103 (ACYV…IWMI), 124 to 144 (VFVA…WFSF), 176 to 196 (ITLI…YIWI), 227 to 247 (FQVF…SMFT), and 258 to 278 (AISV…ILFV). The disordered stretch occupies residues 290–324 (KQPKPHPEMCGPIRSNTRTTSISVTNNSSHLSSAH). A compositionally biased stretch (polar residues) spans 303-324 (RSNTRTTSISVTNNSSHLSSAH).

The protein belongs to the nematode receptor-like protein srd family.

The protein resides in the membrane. This Caenorhabditis elegans protein is Serpentine receptor class delta-30 (srd-30).